The chain runs to 265 residues: Thymidylate synthase (265 aa).

Position 21 (R21) interacts with dUMP. Residue H51 participates in (6R)-5,10-methylene-5,6,7,8-tetrahydrofolate binding. Residue 127–128 (RR) participates in dUMP binding. C147 (nucleophile) is an active-site residue. Residues 167 to 170 (RSAD), N178, and 208 to 210 (HLY) contribute to the dUMP site. Residue D170 coordinates (6R)-5,10-methylene-5,6,7,8-tetrahydrofolate. Position 264 (S264) interacts with (6R)-5,10-methylene-5,6,7,8-tetrahydrofolate.

It belongs to the thymidylate synthase family. Bacterial-type ThyA subfamily. In terms of assembly, homodimer.

It localises to the cytoplasm. It catalyses the reaction dUMP + (6R)-5,10-methylene-5,6,7,8-tetrahydrofolate = 7,8-dihydrofolate + dTMP. The protein operates within pyrimidine metabolism; dTTP biosynthesis. Functionally, catalyzes the reductive methylation of 2'-deoxyuridine-5'-monophosphate (dUMP) to 2'-deoxythymidine-5'-monophosphate (dTMP) while utilizing 5,10-methylenetetrahydrofolate (mTHF) as the methyl donor and reductant in the reaction, yielding dihydrofolate (DHF) as a by-product. This enzymatic reaction provides an intracellular de novo source of dTMP, an essential precursor for DNA biosynthesis. The chain is Thymidylate synthase from Neisseria gonorrhoeae.